Consider the following 628-residue polypeptide: MDLISVLPSASKSCVCLHKPLSSSTHKLKPFCRTIRILGMPRPRKSVLMVSSMSISVNTLVSDDAVQRRTGGYHSNLWNDDVIQFLSTPYGELAYRERAERLIDEVRNIFNSMSLEDGEFSDLIIQRLWMVDNVERLGIDRHFKNEIKSALDYVYSYWSQKGIGCGTKSIITDLNSTALGFRTLRLHGYPVSADVLKHFRNQIGQFVSCPSETEEDIRSMVNLYRASLIAFPGEEVMEEAESFSEKYLKETLQKIPDCSLSREIGDVLEHGWHTNLPRFEARNYIDVFGQDTKNMESNRKTEKLLELAKLEFNIFQSIQKTELESLLRWWNDSGSPQITFTRHRHVEYYTLASCIAFEPQHSGFRLGFAKACHIITVLDDMYDLFGTVEELKLFTAAIKRWDPSATDCLPQYMKGIYMMVYNTVNEMSAEAQKAQGRDTLNYARQAWEVYLDSYVQEAKWIATGYLPTFEEYLENGKVSSGHRVSALQPMLTMDIPFPPHILKEVDFPSNLNDLACAILRLRGDTRCYQEDRARGEETSCISCYMKDNPGATEEDALNHLNVMISGVIKELNWELLKPDSSVPISSKKINFDITRAFHYGYKYRDGYSVSSVETKSLVMRTLLEPVPL.

A chloroplast-targeting transit peptide spans 1–51 (MDLISVLPSASKSCVCLHKPLSSSTHKLKPFCRTIRILGMPRPRKSVLMVS). Positions 379, 383, and 531 each coordinate Mg(2+). The DDXXD motif signature appears at 379–383 (DDMYD).

The protein belongs to the terpene synthase family. Tpsd subfamily. The cofactor is Mg(2+). Requires Mn(2+) as cofactor.

The protein localises to the plastid. Its subcellular location is the chloroplast. It carries out the reaction (2E)-geranyl diphosphate = (1S,5S)-beta-pinene + diphosphate. It catalyses the reaction (2E)-geranyl diphosphate = (1S,5S)-alpha-pinene + diphosphate. Its pathway is terpene metabolism; oleoresin biosynthesis. It participates in secondary metabolite biosynthesis; terpenoid biosynthesis. In terms of biological role, monoterpene synthase (TPS) involved in the biosynthesis of monoterpene natural products included in conifer oleoresin secretions and volatile emissions; these compounds contribute to biotic and abiotic stress defense against herbivores and pathogens. Catalyzes the conversion of (2E)-geranyl diphosphate (GPP) to (-)-beta-pinene and, to a lower extent, to (-)-alpha-pinene. In Pinus banksiana (Jack pine), this protein is (-)-beta-pinene synthase 1, chloroplastic.